Consider the following 591-residue polypeptide: Potassium channel KAT4 (591 aa).

The Cytoplasmic portion of the chain corresponds to 1 to 32; it reads MAARSELLRPAFGEASPSLGRFVINPHSCSYR. Residues 33-53 form a helical membrane-spanning segment; that stretch reads WWHMFLIMLVLYSAWASPFEL. The Extracellular portion of the chain corresponds to 54 to 63; that stretch reads SMEKAASIAL. A helical membrane pass occupies residues 64-84; the sequence is VVTDLVVDVFFAIDIALSFFV. Over 85 to 109 the chain is Cytoplasmic; that stretch reads AYRDTSTGLLITDRRKITMRYLKRP. A helical membrane pass occupies residues 110 to 130; it reads CFALDVASTIPLQIIYQLVTG. Topologically, residues 131–137 are extracellular; the sequence is KRQGLWG. A helical; Voltage-sensor membrane pass occupies residues 138–158; that stretch reads LLNLLRLWRLRRVSKLFARVE. Residues 159-172 are Cytoplasmic-facing; the sequence is KDIRFNYLWTRLIK. Residues 173–193 form a helical membrane-spanning segment; it reads LLCVTLFALHFAACIYLWMAF. The Extracellular segment spans residues 194 to 220; the sequence is NYKIKELTWIGSQIHSFEDRSVWFCYT. An intramembrane region (pore-forming) is located at residues 221 to 240; sequence CAVYWSITTLATVGYGDLHA. Topologically, residues 241–246 are extracellular; that stretch reads TNIGEM. A helical transmembrane segment spans residues 247–267; sequence LFSIAFMLFNMGLTSYIIGNI. At 268-591 the chain is on the cytoplasmic side; the sequence is TNLVVRETSN…IRDGDHLLFS (324 aa). 349–469 is a binding site for a nucleoside 3',5'-cyclic phosphate; sequence LFQGVSDSLI…YIVFSNFIQY (121 aa). Positions 521 to 591 constitute a KHA domain; the sequence is RVVIHEQLPN…IRDGDHLLFS (71 aa).

This sequence belongs to the potassium channel family. Plant (TC 1.A.1.4) subfamily.

Its subcellular location is the membrane. Functionally, probable inward-rectifying potassium channel. Assuming opened or closed conformations in response to the voltage difference across the membrane, the channel is activated by hyperpolarization. This chain is Potassium channel KAT4, found in Oryza sativa subsp. japonica (Rice).